A 367-amino-acid polypeptide reads, in one-letter code: Isocitrate dehydrogenase [NAD] regulatory subunit 2, mitochondrial (367 aa).

A mitochondrion-targeting transit peptide spans 1–25 (MSRQSFSLLKNLRSIASGSKIQTRS).

The protein belongs to the isocitrate and isopropylmalate dehydrogenases family. Heterooligomer of catalytic and regulatory subunits. As to expression, ubiquitous. Predominantly expressed in roots, stems and leaves.

The protein resides in the mitochondrion. Performs an essential role in the oxidative function of the citric acid cycle. This chain is Isocitrate dehydrogenase [NAD] regulatory subunit 2, mitochondrial (IDH2), found in Arabidopsis thaliana (Mouse-ear cress).